The following is an 87-amino-acid chain: uncharacterized protein (87 aa).

Positions 1–25 (MKIRKILLSSALSFGMLISAVPALA) are cleaved as a signal peptide.

This is an uncharacterized protein from Bacillus subtilis (strain 168).